We begin with the raw amino-acid sequence, 393 residues long: Cholinephosphotransferase 1 (393 aa).

The Lumenal portion of the chain corresponds to 1–40 (MGFFIPQSSLGNLKLYKYQSDDRSFLSNHVLRPFWRKFAT). The helical transmembrane segment at 41–61 (IFPLWMAPNLVTLLGFCFIIF) threads the bilayer. Residues 62–172 (NVLTTLYYDP…YHTHKLYLAE (111 aa)) lie on the Cytoplasmic side of the membrane. Residues 173 to 193 (FCGPVEGIIVLCISFIAVGIY) traverse the membrane as a helical segment. Residues 194-210 (GPQTIWHTKVAQFSWQD) lie on the Lumenal side of the membrane. The helical transmembrane segment at 211–231 (FVFDVETVHLMYAFCTGALIF) threads the bilayer. Over 232–263 (NIVTAHTNVVRYYESQSTKSATPSKTAENISK) the chain is Cytoplasmic. A helical transmembrane segment spans residues 264–284 (AVNGLLPFFAYFSSIFTLVLI). Glutamine 285 is a topological domain (lumenal). A helical membrane pass occupies residues 286–306 (PSFISLALILSIGFSVAFVVG). At 307-320 (RMIIAHLTMQPFPM) the chain is on the cytoplasmic side. A helical membrane pass occupies residues 321–341 (VNFPFLIPTIQLVLYAFMVYV). At 342-348 (LDYQKGS) the chain is on the lumenal side. The chain crosses the membrane as a helical span at residues 349-369 (IVSALVWMGLGLTLAIHGMFI). The Cytoplasmic portion of the chain corresponds to 370–393 (NDIIYDITTFLDIYALSIKHPKEI).

This sequence belongs to the CDP-alcohol phosphatidyltransferase class-I family. Mg(2+) is required as a cofactor.

Its subcellular location is the microsome membrane. The protein localises to the endoplasmic reticulum membrane. It is found in the mitochondrion outer membrane. The catalysed reaction is CDP-choline + a 1,2-diacyl-sn-glycerol = a 1,2-diacyl-sn-glycero-3-phosphocholine + CMP + H(+). It catalyses the reaction CDP-N,N-dimethylethanolamine + a 1,2-diacyl-sn-glycerol = a 1,2-diacyl-sn-glycero-3-phospho-N,N-dimethylethanolamine + CMP + H(+). It participates in phospholipid metabolism; phosphatidylcholine biosynthesis; phosphatidylcholine from phosphocholine: step 2/2. Requires a divalent cation activator, and is inhibited by CMP. Activated by phospholipids, especially phosphatidylcholine. Functionally, catalyzes the final step in the CDP-choline route leading to phosphatidylcholin (PC). Preferentially uses CDP-monomethylethanolamine as aminoalcohol substrate. Shows highest activity toward di- and mono-unsaturated diacylglycerol species as lipid substrates. The CDP-choline pathway only contributes to net PC synthesis if exogenous choline is present. In its absence, this pathway recycles choline from PC turnover and may contribute to maintaining the proper PC species composition. This is Cholinephosphotransferase 1 (CPT1) from Saccharomyces cerevisiae (strain ATCC 204508 / S288c) (Baker's yeast).